The primary structure comprises 199 residues: GTP cyclohydrolase 1 (199 aa).

3 residues coordinate Zn(2+): cysteine 89, histidine 92, and cysteine 161.

The protein belongs to the GTP cyclohydrolase I family. As to quaternary structure, toroid-shaped homodecamer, composed of two pentamers of five dimers.

The catalysed reaction is GTP + H2O = 7,8-dihydroneopterin 3'-triphosphate + formate + H(+). It functions in the pathway cofactor biosynthesis; 7,8-dihydroneopterin triphosphate biosynthesis; 7,8-dihydroneopterin triphosphate from GTP: step 1/1. The chain is GTP cyclohydrolase 1 from Bifidobacterium longum (strain NCC 2705).